The following is a 295-amino-acid chain: Shikimate dehydrogenase (NADP(+)) (295 aa).

Shikimate contacts are provided by residues 24-26 (SRS) and Thr71. The Proton acceptor role is filled by Lys75. Glu87 provides a ligand contact to NADP(+). Shikimate is bound by residues Asn96 and Asp111. NADP(+)-binding positions include 136 to 140 (GAGGA), 160 to 165 (NRTASR), and Met233. Shikimate is bound at residue Tyr235. NADP(+) is bound at residue Gly256.

It belongs to the shikimate dehydrogenase family. As to quaternary structure, homodimer.

The enzyme catalyses shikimate + NADP(+) = 3-dehydroshikimate + NADPH + H(+). Its pathway is metabolic intermediate biosynthesis; chorismate biosynthesis; chorismate from D-erythrose 4-phosphate and phosphoenolpyruvate: step 4/7. Its function is as follows. Involved in the biosynthesis of the chorismate, which leads to the biosynthesis of aromatic amino acids. Catalyzes the reversible NADPH linked reduction of 3-dehydroshikimate (DHSA) to yield shikimate (SA). The polypeptide is Shikimate dehydrogenase (NADP(+)) (Cupriavidus taiwanensis (strain DSM 17343 / BCRC 17206 / CCUG 44338 / CIP 107171 / LMG 19424 / R1) (Ralstonia taiwanensis (strain LMG 19424))).